We begin with the raw amino-acid sequence, 176 residues long: NAD(P)H-quinone oxidoreductase subunit I, chloroplastic (176 aa).

2 4Fe-4S ferredoxin-type domains span residues 55 to 84 and 95 to 124; these read GRIH…VDWE and LNYS…MTEE. [4Fe-4S] cluster is bound by residues C64, C67, C70, C74, C104, C107, C110, and C114.

This sequence belongs to the complex I 23 kDa subunit family. NDH is composed of at least 16 different subunits, 5 of which are encoded in the nucleus. [4Fe-4S] cluster serves as cofactor.

The protein localises to the plastid. It localises to the chloroplast thylakoid membrane. It carries out the reaction a plastoquinone + NADH + (n+1) H(+)(in) = a plastoquinol + NAD(+) + n H(+)(out). The enzyme catalyses a plastoquinone + NADPH + (n+1) H(+)(in) = a plastoquinol + NADP(+) + n H(+)(out). NDH shuttles electrons from NAD(P)H:plastoquinone, via FMN and iron-sulfur (Fe-S) centers, to quinones in the photosynthetic chain and possibly in a chloroplast respiratory chain. The immediate electron acceptor for the enzyme in this species is believed to be plastoquinone. Couples the redox reaction to proton translocation, and thus conserves the redox energy in a proton gradient. In Populus trichocarpa (Western balsam poplar), this protein is NAD(P)H-quinone oxidoreductase subunit I, chloroplastic.